A 295-amino-acid polypeptide reads, in one-letter code: Elongation factor Ts (295 aa).

The involved in Mg(2+) ion dislocation from EF-Tu stretch occupies residues 79–82; the sequence is TDFV.

The protein belongs to the EF-Ts family.

The protein resides in the cytoplasm. In terms of biological role, associates with the EF-Tu.GDP complex and induces the exchange of GDP to GTP. It remains bound to the aminoacyl-tRNA.EF-Tu.GTP complex up to the GTP hydrolysis stage on the ribosome. The sequence is that of Elongation factor Ts from Bacillus cytotoxicus (strain DSM 22905 / CIP 110041 / 391-98 / NVH 391-98).